The sequence spans 240 residues: Ubiquinone biosynthesis O-methyltransferase (240 aa).

R44, G64, D85, and M129 together coordinate S-adenosyl-L-methionine.

This sequence belongs to the methyltransferase superfamily. UbiG/COQ3 family.

It carries out the reaction a 3-demethylubiquinol + S-adenosyl-L-methionine = a ubiquinol + S-adenosyl-L-homocysteine + H(+). The catalysed reaction is a 3-(all-trans-polyprenyl)benzene-1,2-diol + S-adenosyl-L-methionine = a 2-methoxy-6-(all-trans-polyprenyl)phenol + S-adenosyl-L-homocysteine + H(+). It participates in cofactor biosynthesis; ubiquinone biosynthesis. O-methyltransferase that catalyzes the 2 O-methylation steps in the ubiquinone biosynthetic pathway. The sequence is that of Ubiquinone biosynthesis O-methyltransferase from Photorhabdus laumondii subsp. laumondii (strain DSM 15139 / CIP 105565 / TT01) (Photorhabdus luminescens subsp. laumondii).